The sequence spans 249 residues: Probable cobalt-factor III C(17)-methyltransferase (249 aa).

It belongs to the precorrin methyltransferase family.

The enzyme catalyses Co(II)-factor III + S-adenosyl-L-methionine + H(+) = Co(II)-factor IV + S-adenosyl-L-homocysteine. It participates in cofactor biosynthesis; adenosylcobalamin biosynthesis; cob(II)yrinate a,c-diamide from sirohydrochlorin (anaerobic route): step 3/10. Methyltransferase that likely catalyzes the ring contraction and methylation of C-17 in cobalt-factor III to form cobalt-factor IV. May also convert cobalt-precorrin-3 to cobalt-precorrin-4. This Methanocaldococcus jannaschii (strain ATCC 43067 / DSM 2661 / JAL-1 / JCM 10045 / NBRC 100440) (Methanococcus jannaschii) protein is Probable cobalt-factor III C(17)-methyltransferase (cbiH).